Consider the following 506-residue polypeptide: L-amino-acid oxidase (506 aa).

An N-terminal signal peptide occupies residues 1-18; it reads MNVFFTFSLLFLAALGSC. An intrachain disulfide couples Cys-28 to Cys-191. Glu-36 serves as a coordination point for Zn(2+). Residues 61–62, Ser-62, 81–82, Arg-89, and 105–108 each bind FAD; these read MS, EA, and GPMR. Residue Arg-108 coordinates substrate. Zn(2+) contacts are provided by Glu-111, Glu-118, and Glu-150. An N-linked (GlcNAc...) asparagine glycan is attached at Asn-190. Asp-219 is a binding site for Zn(2+). His-241 provides a ligand contact to substrate. Glu-248 provides a ligand contact to Zn(2+). Residue Val-279 coordinates FAD. Zn(2+) is bound by residues Glu-299 and His-332. A disulfide bridge links Cys-349 with Cys-430. Tyr-390 is a binding site for substrate. His-458 lines the Zn(2+) pocket. Residues Glu-475 and 482-487 contribute to the FAD site; that span reads GWIDST. Position 482-483 (482-483) interacts with substrate; the sequence is GW.

It belongs to the flavin monoamine oxidase family. FIG1 subfamily. Homodimer; non-covalently linked. Stabilized by a single zinc-binding site located at the dimer interface (Asp-219, His-332 and His-458). Other zinc-bind sites can be understood as transient and non-specific, and appear due to the high concentration of zinc ions used in the crystallization experiments. Requires FAD as cofactor. Expressed by the venom gland.

The protein localises to the secreted. It carries out the reaction an L-alpha-amino acid + O2 + H2O = a 2-oxocarboxylate + H2O2 + NH4(+). It catalyses the reaction L-leucine + O2 + H2O = 4-methyl-2-oxopentanoate + H2O2 + NH4(+). The enzyme catalyses L-phenylalanine + O2 + H2O = 3-phenylpyruvate + H2O2 + NH4(+). The catalysed reaction is L-tryptophan + O2 + H2O = indole-3-pyruvate + H2O2 + NH4(+). It carries out the reaction L-methionine + O2 + H2O = 4-methylsulfanyl-2-oxobutanoate + H2O2 + NH4(+). It catalyses the reaction L-isoleucine + O2 + H2O = (S)-3-methyl-2-oxopentanoate + H2O2 + NH4(+). The enzyme catalyses L-tyrosine + O2 + H2O = 3-(4-hydroxyphenyl)pyruvate + H2O2 + NH4(+). Catalyzes an oxidative deamination of predominantly hydrophobic and aromatic L-amino acids, thus producing hydrogen peroxide that may contribute to the diverse toxic effects of this enzyme. Shows high catalytic activity against L-Met, L-Leu, L-Phe, L-Trp, L-Tyr, L-Ile. Shows no or weak activity on L-Cys, L-Val, L-Gln, L-Thr, L-Ser, L-Lys, L-Arg, L-Asn, L-Glu, L-Gly, L-Pro, L-Asp and L-His. Induces platelet aggregation in platelet-rich plasma, probably due to hydrogen peroxide production, since catalase inhibits aggregation effect. Induces moderate mouse paw edema. Induces apoptosis and shows cytotoxicity against several cancer cell lines, which is inhibited by catalase. Shows hemolytic activity and antibacterial activities against both Gram-positive and Gram-negative bacteria. Has parasiticidal activities against both trypanosomes and leishmania, as a result of enzyme-catalyzed hydrogen peroxide production. Unlike other snake venom L-amino acid oxidases, does not induce hemorrhage (with 50 ug of enzyme). This chain is L-amino-acid oxidase, found in Bothrops atrox (Barba amarilla).